We begin with the raw amino-acid sequence, 438 residues long: Coenzyme A disulfide reductase (438 aa).

8-33 provides a ligand contact to FAD; that stretch reads GAVAGGATCASQIRRLDKESDIIIFE. Substrate is bound by residues threonine 15, glutamine 19, arginine 22, serine 39, and asparagine 42. Cysteine 43 serves as the catalytic Nucleophile. Cysteine 43 functions as the Redox-active in the catalytic mechanism. Lysine 71 is a binding site for substrate. An NADP(+)-binding site is contributed by 151-166; that stretch reads VLVIGAGYVSLEVLEN. 267 to 277 lines the FAD pocket; that stretch reads TNVPNIYAIGD. Residue histidine 299 coordinates substrate. Tyrosine 419 contacts FAD. A substrate-binding site is contributed by lysine 427.

This sequence belongs to the class-III pyridine nucleotide-disulfide oxidoreductase family. As to quaternary structure, homodimer. It depends on FAD as a cofactor.

It catalyses the reaction NADP(+) + 2 CoA = CoA-disulfide + NADPH + H(+). Functionally, catalyzes specifically the NADPH-dependent reduction of coenzyme A disulfide. The polypeptide is Coenzyme A disulfide reductase (Staphylococcus aureus (strain JH1)).